The following is a 256-amino-acid chain: 5-keto-4-deoxy-D-glucarate aldolase (256 aa).

His50 (proton acceptor) is an active-site residue. Gln151 contacts substrate. Mg(2+) is bound at residue Glu153. Positions 178 and 179 each coordinate substrate. Asp179 lines the Mg(2+) pocket.

This sequence belongs to the HpcH/HpaI aldolase family. KDGluc aldolase subfamily. Homohexamer; trimer of dimers. The cofactor is Mg(2+).

The catalysed reaction is 5-dehydro-4-deoxy-D-glucarate = 2-hydroxy-3-oxopropanoate + pyruvate. It catalyses the reaction 2-dehydro-3-deoxy-D-glucarate = 2-hydroxy-3-oxopropanoate + pyruvate. The protein operates within carbohydrate acid metabolism; galactarate degradation; D-glycerate from galactarate: step 2/3. Catalyzes the reversible retro-aldol cleavage of both 5-keto-4-deoxy-D-glucarate and 2-keto-3-deoxy-D-glucarate to pyruvate and tartronic semialdehyde. The polypeptide is 5-keto-4-deoxy-D-glucarate aldolase (Salmonella paratyphi A (strain ATCC 9150 / SARB42)).